Reading from the N-terminus, the 428-residue chain is Serine--tRNA ligase (428 aa).

Residue 235–237 participates in L-serine binding; that stretch reads TAE. ATP is bound at residue 266–268; that stretch reads RSE. L-serine is bound at residue glutamate 289. 353 to 356 contacts ATP; that stretch reads EISS. An L-serine-binding site is contributed by serine 389.

This sequence belongs to the class-II aminoacyl-tRNA synthetase family. Type-1 seryl-tRNA synthetase subfamily. As to quaternary structure, homodimer. The tRNA molecule binds across the dimer.

It localises to the cytoplasm. The enzyme catalyses tRNA(Ser) + L-serine + ATP = L-seryl-tRNA(Ser) + AMP + diphosphate + H(+). It carries out the reaction tRNA(Sec) + L-serine + ATP = L-seryl-tRNA(Sec) + AMP + diphosphate + H(+). It functions in the pathway aminoacyl-tRNA biosynthesis; selenocysteinyl-tRNA(Sec) biosynthesis; L-seryl-tRNA(Sec) from L-serine and tRNA(Sec): step 1/1. Its function is as follows. Catalyzes the attachment of serine to tRNA(Ser). Is also able to aminoacylate tRNA(Sec) with serine, to form the misacylated tRNA L-seryl-tRNA(Sec), which will be further converted into selenocysteinyl-tRNA(Sec). In Shewanella woodyi (strain ATCC 51908 / MS32), this protein is Serine--tRNA ligase.